We begin with the raw amino-acid sequence, 336 residues long: F420-dependent glucose-6-phosphate dehydrogenase (336 aa).

Asp-40 is a coenzyme F420-(gamma-Glu)n binding site. His-41 functions as the Proton donor in the catalytic mechanism. Coenzyme F420-(gamma-Glu)n is bound by residues Thr-77 and 108–109 (TG). The active-site Proton acceptor is Glu-110. Coenzyme F420-(gamma-Glu)n-binding positions include Asn-113, 176–177 (SG), and 179–180 (AA). Positions 194, 197, 258, and 282 each coordinate substrate.

The protein belongs to the F420-dependent glucose-6-phosphate dehydrogenase family. Homodimer.

It carries out the reaction oxidized coenzyme F420-(gamma-L-Glu)(n) + D-glucose 6-phosphate + H(+) = 6-phospho-D-glucono-1,5-lactone + reduced coenzyme F420-(gamma-L-Glu)(n). Its function is as follows. Catalyzes the coenzyme F420-dependent oxidation of glucose 6-phosphate (G6P) to 6-phosphogluconolactone. The chain is F420-dependent glucose-6-phosphate dehydrogenase from Microbacterium testaceum (strain StLB037).